Reading from the N-terminus, the 302-residue chain is Sulfate adenylyltransferase subunit 2 (302 aa).

This sequence belongs to the PAPS reductase family. CysD subfamily. In terms of assembly, heterodimer composed of CysD, the smaller subunit, and CysN.

It carries out the reaction sulfate + ATP + H(+) = adenosine 5'-phosphosulfate + diphosphate. The protein operates within sulfur metabolism; hydrogen sulfide biosynthesis; sulfite from sulfate: step 1/3. Its function is as follows. With CysN forms the ATP sulfurylase (ATPS) that catalyzes the adenylation of sulfate producing adenosine 5'-phosphosulfate (APS) and diphosphate, the first enzymatic step in sulfur assimilation pathway. APS synthesis involves the formation of a high-energy phosphoric-sulfuric acid anhydride bond driven by GTP hydrolysis by CysN coupled to ATP hydrolysis by CysD. The chain is Sulfate adenylyltransferase subunit 2 from Photorhabdus laumondii subsp. laumondii (strain DSM 15139 / CIP 105565 / TT01) (Photorhabdus luminescens subsp. laumondii).